The primary structure comprises 281 residues: MSTSANRSTPSARTVFFISDGTGITAETFGHSVLTQFDLRFKQIRLPFIDTLDKAHDALRKINDAYELDGQRPIIFSTLVKANLSKVVRQSKGMHMDLIQTFVEPLEQELGVKSTHTIGRSHTSTDSEEYKNRIEAINFSLAHDDGQSNKNLAEADVILVGVSRSGKTPTSLFLAMQYGIKAANYPLIPDDFAREKLPGGLLEYKSKIFGLSIAPDRLAEIRNERLPGSKYAALANCRYEVNEAEKMMRREGIRWMSSTTKSIEEISATILQEIKSEHRTD.

Position 161-168 (161-168 (GVSRSGKT)) interacts with ADP.

This sequence belongs to the pyruvate, phosphate/water dikinase regulatory protein family. PSRP subfamily.

It catalyses the reaction [pyruvate, water dikinase] + ADP = [pyruvate, water dikinase]-phosphate + AMP + H(+). The enzyme catalyses [pyruvate, water dikinase]-phosphate + phosphate + H(+) = [pyruvate, water dikinase] + diphosphate. Bifunctional serine/threonine kinase and phosphorylase involved in the regulation of the phosphoenolpyruvate synthase (PEPS) by catalyzing its phosphorylation/dephosphorylation. In Herminiimonas arsenicoxydans, this protein is Putative phosphoenolpyruvate synthase regulatory protein.